Reading from the N-terminus, the 128-residue chain is Large ribosomal subunit protein bL17 (128 aa).

This sequence belongs to the bacterial ribosomal protein bL17 family. Part of the 50S ribosomal subunit. Contacts protein L32.

This chain is Large ribosomal subunit protein bL17, found in Streptococcus suis (strain 98HAH33).